Consider the following 228-residue polypeptide: Ribonuclease 3 1 (228 aa).

The region spanning 1–124 (MYKLLMFRDD…VIGAYYLDNN (124 aa)) is the RNase III domain. Glutamate 37 contacts Mg(2+). Residue aspartate 41 is part of the active site. Residues serine 110 and glutamate 113 each contribute to the Mg(2+) site. Glutamate 113 is an active-site residue. One can recognise a DRBM domain in the interval 153–223 (DSKNRFQEWV…AENALANLNK (71 aa)).

This sequence belongs to the ribonuclease III family. In terms of assembly, homodimer. It depends on Mg(2+) as a cofactor.

The protein localises to the cytoplasm. It carries out the reaction Endonucleolytic cleavage to 5'-phosphomonoester.. Functionally, digests double-stranded RNA. Involved in the processing of primary rRNA transcript to yield the immediate precursors to the large and small rRNAs (23S and 16S). Processes some mRNAs, and tRNAs when they are encoded in the rRNA operon. Processes pre-crRNA and tracrRNA of type II CRISPR loci if present in the organism. The protein is Ribonuclease 3 1 of Nostoc sp. (strain PCC 7120 / SAG 25.82 / UTEX 2576).